We begin with the raw amino-acid sequence, 426 residues long: C2H2 type master regulator of conidiophore development brlA (426 aa).

Disordered regions lie at residues 25 to 71 and 281 to 302; these read CPSM…DRGT and GVRLQRQPSRKMARKQPSKQSL. A compositionally biased stretch (low complexity) spans 30–44; sequence SSFSPLESPTPTPTS. The segment covering 45 to 58 has biased composition (polar residues); it reads IYSQGSLASPSWPE. Over residues 288 to 297 the composition is skewed to basic residues; that stretch reads PSRKMARKQP. 2 C2H2-type zinc fingers span residues 316-340 and 346-371; these read FKCKEPGCKGRFKRQEHLKRHMKSH and HVCWVPGCHRAFSRSDNLNAHYTKTH. The tract at residues 384–426 is disordered; it reads LDETSPDYNPDYRGPLTADGRPMPGGTLDESMPSREISMEWDE.

The protein resides in the nucleus. Its function is as follows. BrlA, abaA and wetA are pivotal regulators of conidiophore development and conidium maturation. They act individually and together to regulate their own expression and that of numerous other sporulation-specific genes. Binds promoters of target genes at brlA response elements (BREs) containing the conserved sequence 5'-(C/A)(A/G)AGGG(G/A)-3'. Positively regulates expression of the gliotoxin biosynthetic gene cluster in actively growing vegetative cells, and likely bridges morphological and chemical development during the life-cycle. Regulates (directly or indirectly) the ergot cluster genes. Positively regulates expression of the fumiquinazoline C biosynthetic gene cluster. Positively regulates expression of the melanin biosynthetic gene cluster. Mediates repression of ribosomal protein gene expression in response to nitrogen depletion. The polypeptide is C2H2 type master regulator of conidiophore development brlA (Aspergillus fumigatus (strain ATCC MYA-4609 / CBS 101355 / FGSC A1100 / Af293) (Neosartorya fumigata)).